The chain runs to 111 residues: Putative ciliary rootlet coiled-coil protein-like 1 protein (111 aa).

The stretch at 21 to 86 (MELELSVTKL…RQAEQEATVA (66 aa)) forms a coiled coil.

This sequence belongs to the rootletin family.

The protein is Putative ciliary rootlet coiled-coil protein-like 1 protein (CROCCP2) of Homo sapiens (Human).